The following is a 236-amino-acid chain: MADS-box transcription factor 3 (236 aa).

The MADS-box domain maps to 1–61 (MGRGKIEIKR…GRLYEYANNS (61 aa)). In terms of domain architecture, K-box spans 87–178 (AQHYQQESSK…RSKVVENERG (92 aa)).

In terms of tissue distribution, expressed in lemmas, paleas and lodicules.

The protein resides in the nucleus. Functionally, probable transcription factor involved in the development of floral organs. Acts as C-class protein in association with MADS58. Involved in the control of lodicule number (whorl 2), stamen specification (whorl 3) and floral meristem determinacy (whorl 4), but not in the regulation of carpel morphogenesis. Plays a more predominant role in controlling lodicule development and in specifying stamen identity than MADS58. This chain is MADS-box transcription factor 3 (MADS3), found in Oryza sativa subsp. japonica (Rice).